The primary structure comprises 615 residues: Nitrogen permease regulator 2 (615 aa).

A compositionally biased stretch (low complexity) spans 143–167; the sequence is STTTPSTAGPSSTPNPSSNTTPTHP. Disordered regions lie at residues 143 to 176, 354 to 398, and 527 to 551; these read STTT…TKDM, SLGS…QNSS, and SATG…VSFE. At S362 the chain carries Phosphoserine. Positions 373-398 are enriched in low complexity; the sequence is SSSIPSNPDSRTTSFSSTSRVSQNSS. A compositionally biased stretch (polar residues) spans 527 to 539; sequence SATGSRNTAQSGN.

This sequence belongs to the NPR2 family. In terms of assembly, component of the SEA complex composed of at least IML1/SEA1, RTC1/SEA2, MTC5/SEA3, NPR2, NPR3, SEA4, SEC13 and SEH1. Forms a heterodimer with NPR3.

The protein localises to the vacuole membrane. Its function is as follows. Component of the SEA complex which coats the vacuolar membrane and is involved in intracellular trafficking, autophagy, response to nitrogen starvation, and amino acid biogenesis. Mediates inactivation of the TORC1 complex in response to amino acid starvation. Post-transcriptional regulator of nitrogen permeases. May be involved in putative NPR1-dependent phosphorylation of nitrogen permeases or in the processing and targeting of nitrogen permeases at the level of the endoplasmic reticulum. The polypeptide is Nitrogen permease regulator 2 (NPR2) (Saccharomyces cerevisiae (strain ATCC 204508 / S288c) (Baker's yeast)).